We begin with the raw amino-acid sequence, 305 residues long: Protoheme IX farnesyltransferase (305 aa).

9 consecutive transmembrane segments (helical) span residues 28–48 (VVLL…PGIV), 52–72 (VFLF…AINH), 102–122 (IFAA…VNLL), 123–143 (TALL…LYLK), 150–170 (IVIG…AVTG), 176–196 (ALIL…ALAI), 221–241 (INIL…FVIM), 243–263 (SGWI…YWAI), and 282–302 (IWYL…YLAL).

It belongs to the UbiA prenyltransferase family. Protoheme IX farnesyltransferase subfamily.

It localises to the cell inner membrane. It carries out the reaction heme b + (2E,6E)-farnesyl diphosphate + H2O = Fe(II)-heme o + diphosphate. It participates in porphyrin-containing compound metabolism; heme O biosynthesis; heme O from protoheme: step 1/1. Converts heme B (protoheme IX) to heme O by substitution of the vinyl group on carbon 2 of heme B porphyrin ring with a hydroxyethyl farnesyl side group. This Coxiella burnetii (strain CbuK_Q154) (Coxiella burnetii (strain Q154)) protein is Protoheme IX farnesyltransferase.